The chain runs to 288 residues: Ankyrin repeat and SOCS box protein 8 (288 aa).

Ser-17 bears the Phosphoserine mark. 4 ANK repeats span residues 52–81 (GTLKPLHCACMVSDADCVELLLEKGAEVNA), 85–113 (YNRTALHYAAEKDEACVEVLLEYGANPNA), 117–146 (NRDTPLHWAAFKNNAECVRALLESGASVNA), and 150–179 (NNDTPLSWAAMKGNLESVSILLDYGAEVRV). The SOCS box domain maps to 235–288 (QLCEKLTVLCSAPGTLKTLARYTVRRSLGLQYLPDAVKGLPLPASLKEYLLLLE).

It belongs to the ankyrin SOCS box (ASB) family. In terms of assembly, interacts with TBK1; this interaction promotes TBK1 proteasomal degradation. Post-translationally, phosphorylated by TBK1.

It is found in the cytoplasm. It participates in protein modification; protein ubiquitination. Its function is as follows. May be a substrate-recognition component of a SCF-like ECS (Elongin-Cullin-SOCS-box protein) E3 ubiquitin-protein ligase complex which mediates the ubiquitination and subsequent proteasomal degradation of target proteins. Inhibits IFN-beta production through the IRF3 signaling pathway by targeting TBK1 via 'Lys-48'-linked ubiquitination, leading to its proteasomal degradation. This chain is Ankyrin repeat and SOCS box protein 8 (ASB8), found in Pongo abelii (Sumatran orangutan).